Reading from the N-terminus, the 333-residue chain is NAC domain-containing protein 26 (333 aa).

Residues 14 to 173 (LPPGFRFHPT…DWAVCRIFHK (160 aa)) form the NAC domain. The DNA-binding element occupies 114-179 (IGMKKTLVFY…IFHKSSGIKK (66 aa)). Positions 143–162 (ADASPPQPPPPPSSAEPPRQ) are disordered. Pro residues predominate over residues 147–157 (PPQPPPPPSSA).

As to quaternary structure, forms homodimers. Forms heterodimers with NAC20. Forms heterodimers with NAC23. In terms of tissue distribution, expressed in developing seeds.

The protein resides in the nucleus. Functionally, transcription factor that acts redundantly with NAC20 to regulate the expression of genes involved in the biosynthesis of starch and storage proteins in grain. Directly binds to the promoters of starch synthase 1 (SS1), pullulanase (PUL), glutelin A1 (GLUA1), glutelins B4 and B5 (GLUB4 and GLUB5), alpha-globulin and 16 kDa prolamin, and activates their expression. Possesses transactivation activity in yeast. The sequence is that of NAC domain-containing protein 26 from Oryza sativa subsp. indica (Rice).